The primary structure comprises 427 residues: Trigger factor (427 aa).

Residues 163-248 (GDTVVIDFVG…IHEVKAKEVP (86 aa)) form the PPIase FKBP-type domain.

Belongs to the FKBP-type PPIase family. Tig subfamily.

The protein resides in the cytoplasm. It carries out the reaction [protein]-peptidylproline (omega=180) = [protein]-peptidylproline (omega=0). In terms of biological role, involved in protein export. Acts as a chaperone by maintaining the newly synthesized protein in an open conformation. Functions as a peptidyl-prolyl cis-trans isomerase. The protein is Trigger factor of Streptococcus pneumoniae (strain JJA).